The primary structure comprises 236 residues: MNNPRTVSDTKRAFYHNHARPINSIYRRVVEELLVEIHLLRVNQTFVYDPVFALGVVTTFERFMQGYHPPADQTSIFNAICLAQELDPQQVQQDAQELLGRVRGQSLESLLDWISTAASLGGDEQQNRLRAIASNPTFKYSRLFAVGLFTLLEQAEPELGKDEARLLQVLQQVGEVMHLPVEKMQKDLEQYRSNLEKMTQARKTLEDIVAAERKRRQQNAAPDRSPESASATEAPN.

Residues 180-220 (PVEKMQKDLEQYRSNLEKMTQARKTLEDIVAAERKRRQQNA) are a coiled coil. The disordered stretch occupies residues 206–236 (EDIVAAERKRRQQNAAPDRSPESASATEAPN). Residues 227–236 (ESASATEAPN) show a composition bias toward polar residues.

It belongs to the THF1 family.

Functionally, may be involved in photosynthetic membrane biogenesis. The protein is Protein Thf1 of Cyanothece sp. (strain PCC 7425 / ATCC 29141).